Here is a 490-residue protein sequence, read N- to C-terminus: Selenium-binding protein 1 (490 aa).

Alanine 2 carries the post-translational modification N-acetylalanine. Cysteine 21 and cysteine 22 together coordinate selenite.

This sequence belongs to the selenium-binding protein family. As to quaternary structure, interacts with GRXS14 and GRXS16. Interacts with DALL3. As to expression, expressed in seedlings, roots, leaves, stems and flowers.

In terms of biological role, binds cadmium and mediates lower sensitivity to stress requiring glutathione (GSH) for tolerance (e.g. cadmium, selenate, and hydrogen peroxide excess). Probably helps to detoxify cadmium potentially through direct binding. Binds selenium, cadmium, zinc and nickel in vitro. The sequence is that of Selenium-binding protein 1 from Arabidopsis thaliana (Mouse-ear cress).